Consider the following 152-residue polypeptide: Deoxyuridine 5'-triphosphate nucleotidohydrolase (152 aa).

Substrate contacts are provided by residues 71-73 (RSG), N84, 88-90 (LID), and M98.

This sequence belongs to the dUTPase family. Requires Mg(2+) as cofactor.

The catalysed reaction is dUTP + H2O = dUMP + diphosphate + H(+). It functions in the pathway pyrimidine metabolism; dUMP biosynthesis; dUMP from dCTP (dUTP route): step 2/2. This enzyme is involved in nucleotide metabolism: it produces dUMP, the immediate precursor of thymidine nucleotides and it decreases the intracellular concentration of dUTP so that uracil cannot be incorporated into DNA. This Shewanella sp. (strain ANA-3) protein is Deoxyuridine 5'-triphosphate nucleotidohydrolase.